A 357-amino-acid chain; its full sequence is 3-dehydroquinate synthase (357 aa).

NAD(+)-binding positions include 126–127, lysine 139, and lysine 148; that span reads TT. Positions 181, 244, and 261 each coordinate Zn(2+).

The protein belongs to the sugar phosphate cyclases superfamily. Dehydroquinate synthase family. Co(2+) is required as a cofactor. The cofactor is Zn(2+). NAD(+) serves as cofactor.

The protein localises to the cytoplasm. It carries out the reaction 7-phospho-2-dehydro-3-deoxy-D-arabino-heptonate = 3-dehydroquinate + phosphate. The protein operates within metabolic intermediate biosynthesis; chorismate biosynthesis; chorismate from D-erythrose 4-phosphate and phosphoenolpyruvate: step 2/7. Catalyzes the conversion of 3-deoxy-D-arabino-heptulosonate 7-phosphate (DAHP) to dehydroquinate (DHQ). The sequence is that of 3-dehydroquinate synthase from Solibacter usitatus (strain Ellin6076).